A 148-amino-acid polypeptide reads, in one-letter code: Probable calcium-binding protein CML14 (148 aa).

3 EF-hand domains span residues 9–44 (DQVSSMKEAFMLFDTDGDGKIAPSELGILMRSLGGN), 80–115 (PFDRQLRDAFKVLDKEGTGFVAVADLRHILTSIGEK), and 116–148 (LQPSEFDEWIKEVDVGSDGKIRYEDFIARMVAK). Aspartate 22, aspartate 24, aspartate 26, lysine 28, and glutamate 33 together coordinate Ca(2+).

In terms of biological role, potential calcium sensor. This Arabidopsis thaliana (Mouse-ear cress) protein is Probable calcium-binding protein CML14 (CML14).